A 79-amino-acid chain; its full sequence is Small ribosomal subunit protein bS18 (79 aa).

This sequence belongs to the bacterial ribosomal protein bS18 family. As to quaternary structure, part of the 30S ribosomal subunit. Forms a tight heterodimer with protein bS6.

Its function is as follows. Binds as a heterodimer with protein bS6 to the central domain of the 16S rRNA, where it helps stabilize the platform of the 30S subunit. This Aster yellows witches'-broom phytoplasma (strain AYWB) protein is Small ribosomal subunit protein bS18.